The primary structure comprises 119 residues: Neuropeptide B (119 aa).

The first 21 residues, 1–21 (MVRCRTLVAAALALLLTPALA), serve as a signal peptide directing secretion. The propeptide occupies 53–119 (SESPALRVGT…SLHKAECQSA (67 aa)).

The protein belongs to the neuropeptide B/W family. Detected in a variety of tissues. High levels are found in the lymphoid organs, central nervous system, mammary gland and uterus.

The protein resides in the secreted. Functionally, may be involved in the regulation of feeding, neuroendocrine system, memory and learning. May be involved in the afferent pain pathway. This Rattus norvegicus (Rat) protein is Neuropeptide B (Npb).